We begin with the raw amino-acid sequence, 369 residues long: MPERDPILLTPGPLTTSRMTRDAMLRDWGSWDAAFNRLTKSVCADLVRIAGGGDAYVCVPLQGSGTFAVEATLGTLVPRDARVLVPNNGAYCARIAAILRRLGIAHVELPFAEDEPASAHAIDAALARDARLTHVALVHLETSAGLLNPLDDIAAVCRARGRALIVDAMSSFGALPIALAASGIDALISASGKCLEGVPGMGFAIVRRSALEAAEGRSPSVALDLHDQYAYMQRTSQWRFTPPTHVLAALRAALDQFFDEGGQPARGARYARNCATLVDGMRALGFEPFLDARAQASVIVTFYAPADPAYAFPAFYAAVRDAGYVLYPGKLTTADTFRVGCIGALGADEMRGAVAAIGGALESLGIAMR.

An N6-(pyridoxal phosphate)lysine modification is found at Lys193.

The protein belongs to the class-V pyridoxal-phosphate-dependent aminotransferase family. PhnW subfamily. In terms of assembly, homodimer. Pyridoxal 5'-phosphate is required as a cofactor.

It catalyses the reaction (2-aminoethyl)phosphonate + pyruvate = phosphonoacetaldehyde + L-alanine. Its function is as follows. Involved in phosphonate degradation. The polypeptide is 2-aminoethylphosphonate--pyruvate transaminase (Burkholderia mallei (strain NCTC 10247)).